A 146-amino-acid polypeptide reads, in one-letter code: MAGEGRQLFCRLITPERVVYDGEADLVVAKIADGEIGVMVDHYPVISTVDFWDVRITRGEERRVYATSDGFFKVADNLVQILVEEAVPASEINVEEAEHRIEQAERELGQLPEEEDEDSRRAREEISRRVRLGENLVRVARRYGGG.

Residues 103–124 form a disordered region; that stretch reads QAERELGQLPEEEDEDSRRARE.

Belongs to the ATPase epsilon chain family. F-type ATPases have 2 components, CF(1) - the catalytic core - and CF(0) - the membrane proton channel. CF(1) has five subunits: alpha(3), beta(3), gamma(1), delta(1), epsilon(1). CF(0) has three main subunits: a, b and c.

The protein localises to the cell membrane. Its function is as follows. Produces ATP from ADP in the presence of a proton gradient across the membrane. The polypeptide is ATP synthase epsilon chain (Rubrobacter xylanophilus (strain DSM 9941 / JCM 11954 / NBRC 16129 / PRD-1)).